Consider the following 451-residue polypeptide: Macrophage scavenger receptor types I and II (451 aa).

At 1 to 50 (MEQWDHFHNQQEDTDSCSESVKFDARSMTALLPPNPKNSPSLQEKLKSFK) the chain is on the cytoplasmic side. Position 27 is a phosphoserine (Ser27). A helical; Signal-anchor for type II membrane protein transmembrane segment spans residues 51-76 (AALIALYLLVFAVLIPLIGIVAAQLL). Residues 77-109 (KWETKNCSVSSTNANDITQSLTGKGNDSEEEMR) are spacer. At 77–451 (KWETKNCSVS…SEDAGVTCTL (375 aa)) the chain is on the extracellular side. Asn82, Asn102, Asn143, Asn184, Asn221, Asn249, and Asn267 each carry an N-linked (GlcNAc...) asparagine glycan. The stretch at 171 to 255 (NAIDEISKSL…VLNNITNDLR (85 aa)) forms a coiled coil. Residues 267-346 (NITLIQGPPG…EKGSGNTLTP (80 aa)) are disordered. Residues 273-341 (GPPGPPGEKG…KGQKGEKGSG (69 aa)) enclose the Collagen-like domain. An SRCR domain is found at 350–450 (VRLVGGSGPH…HSEDAGVTCT (101 aa)). 3 cysteine pairs are disulfide-bonded: Cys375–Cys439, Cys388–Cys449, and Cys419–Cys429.

As to quaternary structure, homotrimer. Interacts with MYO18A. Isoform I, isoform II and isoform III are expressed in monocyte-derived macrophages. Isoform I and isoform II are expressed in the liver, placenta and brain.

The protein localises to the membrane. Its function is as follows. Membrane glycoproteins implicated in the pathologic deposition of cholesterol in arterial walls during atherogenesis. Two types of receptor subunits exist. These receptors mediate the endocytosis of a diverse group of macromolecules, including modified low density lipoproteins (LDL). Isoform III does not internalize acetylated LDL. In Homo sapiens (Human), this protein is Macrophage scavenger receptor types I and II (MSR1).